The sequence spans 626 residues: NAD-dependent malic enzyme, mitochondrial (626 aa).

The N-terminal 34 residues, 1–34 (MAIFSNQMRLSSTLLKRLHQRVAAAVNSSSSRNF), are a transit peptide targeting the mitochondrion. Fumarate is bound by residues R91 and R125. Y146 (proton donor) is an active-site residue. A (S)-malate-binding site is contributed by R199. NAD(+) is bound at residue R199. Residue K217 is the Proton acceptor of the active site. E288, D289, and D312 together coordinate a divalent metal cation. Positions 348 and 351 each coordinate NAD(+). (S)-malate is bound by residues N467 and N512.

The protein belongs to the malic enzymes family. In terms of assembly, heterodimer of two related subunits. Mg(2+) serves as cofactor. Requires Mn(2+) as cofactor.

It localises to the mitochondrion matrix. It catalyses the reaction (S)-malate + NAD(+) = pyruvate + CO2 + NADH. In Solanum tuberosum (Potato), this protein is NAD-dependent malic enzyme, mitochondrial.